Here is a 280-residue protein sequence, read N- to C-terminus: Golgi to ER traffic protein 2 (280 aa).

Residues 1–149 (MPSDREKQRI…IAYNLYQQRK (149 aa)) are Cytoplasmic-facing. The tract at residues 15-59 (RQAKMAKGGASDRLNKILSQGSSVKTSAVSVLDQPQPADHDPEGM) is disordered. Positions 31–43 (ILSQGSSVKTSAV) are enriched in polar residues. Residues 150-170 (VRHRFLVVRMVSILANFVYHF) traverse the membrane as a helical segment. Residues 171–197 (LTISDFSFSPSANPFIRSIPPTSSVSS) are Lumenal-facing. A helical transmembrane segment spans residues 198-217 (FFQIFVAIEAVLVAAYIAAS). The Cytoplasmic portion of the chain corresponds to 218 to 257 (RNVPSNNNGLLVKGISMAAMFVPKLQRFQPLIMKIIGCWD). A helical membrane pass occupies residues 258–278 (TVTFVLNDLGLVVLLFGLISF). Over 279–280 (RR) the chain is Lumenal.

The protein belongs to the GET2 family. In terms of assembly, component of the Golgi to ER traffic (GET) complex, which is composed of GET1, GET2 and GET3. Within the complex, GET1 and GET2 form a heterotetramer which is stabilized by phosphatidylinositol binding and which binds to the GET3 homodimer.

It is found in the endoplasmic reticulum membrane. The protein localises to the golgi apparatus membrane. In terms of biological role, required for the post-translational delivery of tail-anchored (TA) proteins to the endoplasmic reticulum. Together with GET1, acts as a membrane receptor for soluble GET3, which recognizes and selectively binds the transmembrane domain of TA proteins in the cytosol. The GET complex cooperates with the HDEL receptor ERD2 to mediate the ATP-dependent retrieval of resident ER proteins that contain a C-terminal H-D-E-L retention signal from the Golgi to the ER. In Meyerozyma guilliermondii (strain ATCC 6260 / CBS 566 / DSM 6381 / JCM 1539 / NBRC 10279 / NRRL Y-324) (Yeast), this protein is Golgi to ER traffic protein 2.